Reading from the N-terminus, the 471-residue chain is Glutamate--tRNA ligase (471 aa).

A 'HIGH' region motif is present at residues 9-19; the sequence is PSPTGYLHVGG. C98, C100, C125, and D127 together coordinate Zn(2+). Positions 237-241 match the 'KMSKS' region motif; that stretch reads KLSKR. K240 provides a ligand contact to ATP.

Belongs to the class-I aminoacyl-tRNA synthetase family. Glutamate--tRNA ligase type 1 subfamily. In terms of assembly, monomer. Zn(2+) is required as a cofactor.

Its subcellular location is the cytoplasm. It carries out the reaction tRNA(Glu) + L-glutamate + ATP = L-glutamyl-tRNA(Glu) + AMP + diphosphate. Its function is as follows. Catalyzes the attachment of glutamate to tRNA(Glu) in a two-step reaction: glutamate is first activated by ATP to form Glu-AMP and then transferred to the acceptor end of tRNA(Glu). The chain is Glutamate--tRNA ligase from Yersinia pestis.